A 165-amino-acid polypeptide reads, in one-letter code: Protein SprT (165 aa).

Residues 20–163 (EKLAQANLKL…RCVHCGEQLV (144 aa)) form the SprT-like domain. His-78 lines the Zn(2+) pocket. Glu-79 is a catalytic residue. Residue His-82 participates in Zn(2+) binding.

This sequence belongs to the SprT family. Zn(2+) is required as a cofactor.

It localises to the cytoplasm. The polypeptide is Protein SprT (Escherichia coli O127:H6 (strain E2348/69 / EPEC)).